The primary structure comprises 61 residues: MLNILNLICICLNFALYSSSFFFTKLPEAYAFLNPIVDVMPVIPLFFFLLAFVWQAAVSFR.

Positions 1-24 (MLNILNLICICLNFALYSSSFFFT) are excised as a propeptide. A helical transmembrane segment spans residues 40–60 (MPVIPLFFFLLAFVWQAAVSF).

It belongs to the PsbK family. PSII is composed of 1 copy each of membrane proteins PsbA, PsbB, PsbC, PsbD, PsbE, PsbF, PsbH, PsbI, PsbJ, PsbK, PsbL, PsbM, PsbT, PsbX, PsbY, PsbZ, Psb30/Ycf12, at least 3 peripheral proteins of the oxygen-evolving complex and a large number of cofactors. It forms dimeric complexes.

Its subcellular location is the plastid. The protein localises to the chloroplast thylakoid membrane. One of the components of the core complex of photosystem II (PSII). PSII is a light-driven water:plastoquinone oxidoreductase that uses light energy to abstract electrons from H(2)O, generating O(2) and a proton gradient subsequently used for ATP formation. It consists of a core antenna complex that captures photons, and an electron transfer chain that converts photonic excitation into a charge separation. The sequence is that of Photosystem II reaction center protein K from Populus alba (White poplar).